The sequence spans 185 residues: Elongation factor P (185 aa).

This sequence belongs to the elongation factor P family.

The protein resides in the cytoplasm. The protein operates within protein biosynthesis; polypeptide chain elongation. Its function is as follows. Involved in peptide bond synthesis. Stimulates efficient translation and peptide-bond synthesis on native or reconstituted 70S ribosomes in vitro. Probably functions indirectly by altering the affinity of the ribosome for aminoacyl-tRNA, thus increasing their reactivity as acceptors for peptidyl transferase. The polypeptide is Elongation factor P (Acetivibrio thermocellus (strain ATCC 27405 / DSM 1237 / JCM 9322 / NBRC 103400 / NCIMB 10682 / NRRL B-4536 / VPI 7372) (Clostridium thermocellum)).